Reading from the N-terminus, the 201-residue chain is ATP-dependent Clp protease proteolytic subunit (201 aa).

Ser105 acts as the Nucleophile in catalysis. The active site involves His130.

This sequence belongs to the peptidase S14 family. As to quaternary structure, fourteen ClpP subunits assemble into 2 heptameric rings which stack back to back to give a disk-like structure with a central cavity, resembling the structure of eukaryotic proteasomes.

It localises to the cytoplasm. It carries out the reaction Hydrolysis of proteins to small peptides in the presence of ATP and magnesium. alpha-casein is the usual test substrate. In the absence of ATP, only oligopeptides shorter than five residues are hydrolyzed (such as succinyl-Leu-Tyr-|-NHMec, and Leu-Tyr-Leu-|-Tyr-Trp, in which cleavage of the -Tyr-|-Leu- and -Tyr-|-Trp bonds also occurs).. Its function is as follows. Cleaves peptides in various proteins in a process that requires ATP hydrolysis. Has a chymotrypsin-like activity. Plays a major role in the degradation of misfolded proteins. In Acinetobacter baylyi (strain ATCC 33305 / BD413 / ADP1), this protein is ATP-dependent Clp protease proteolytic subunit.